Consider the following 146-residue polypeptide: Sperm surface protein Sp17 (146 aa).

A compositionally biased stretch (basic and acidic residues) spans 76 to 88; it reads EHESEKCEAEEKS. The tract at residues 76-109 is disordered; sequence EHESEKCEAEEKSQSVTEEETPVLTIDSEDDKDK. The span at 92-108 shows a compositional bias: acidic residues; that stretch reads TEEETPVLTIDSEDDKD. In terms of domain architecture, IQ spans 110–139; it reads EEMAALKIQAAFRGHLAREDVKKIRTNKAE.

In terms of assembly, homodimer. May interact with ROPN1. In terms of processing, the N-terminus is blocked. Testis- and sperm-specific.

Its subcellular location is the membrane. In terms of biological role, sperm surface zona pellucida binding protein. Helps to bind spermatozoa to the zona pellucida with high affinity. Might function in binding zona pellucida and carbohydrates. The chain is Sperm surface protein Sp17 (SPA17) from Oryctolagus cuniculus (Rabbit).